Here is a 299-residue protein sequence, read N- to C-terminus: Homeobox protein ceh-24 (299 aa).

Over residues 1–35 (MSEKETPSPVLDVKKEKNEETGIDEEKSSEDDCSK) the composition is skewed to basic and acidic residues. 2 disordered regions span residues 1–45 (MSEK…NPSK) and 208–263 (QEKE…SGVF). The homeobox DNA-binding region spans 150–209 (RRKRRVLFSQAQVYELERRFKQAKYLTAPEREQLANSIRLTPTQVKIWFQNHRYKCKRQE). Over residues 242–252 (DDKDDEEEEES) the composition is skewed to acidic residues.

The protein belongs to the NK-2 homeobox family. In terms of tissue distribution, expressed in the 8 vulval muscles, 8-10 ventral neurons in the head and in the most posterior pharyngeal muscle cell, m8. Expressed in SIA, SIB and SMB sublateral motor neurons, and in muscles of the pharynx and vulva.

The protein resides in the nucleus. Functionally, probable transcriptional regulator that is required in neural development for the normal formation of sublateral cholinergic motor neuron processes. Plays a role in regulating the expression of acetylcholine transporter protein unc-17 in the sublateral processes. In particular, it is required in sublateral motor neurons for a left-right turning behavior that occurs during the lethargus phase of the normal sleep process called 'flipping'. During 'flipping' animals rotate 180 degrees about their longitudinal axis. The polypeptide is Homeobox protein ceh-24 (Caenorhabditis elegans).